A 448-amino-acid polypeptide reads, in one-letter code: 5-hydroxytryptamine receptor 7 (448 aa).

At 1-86 (MMDVNSSGRP…INYGRVEKVV (86 aa)) the chain is on the extracellular side. Asn5 and Asn69 each carry an N-linked (GlcNAc...) asparagine glycan. Residues 87–111 (IGSILTLITLLTIAGNCLVVISVCF) form a helical membrane-spanning segment. The Cytoplasmic segment spans residues 112–121 (VKKLRQPSNY). A helical membrane pass occupies residues 122 to 143 (LIVSLALADLSVAVAVMPFVSV). Topologically, residues 144–155 (TDLIGGKWIFGH) are extracellular. Residues 156–181 (FFCNVFIAMDVMCCTASIMTLCVISI) form a helical membrane-spanning segment. A disulfide bond links Cys158 and Cys234. Position 165 (Asp165) interacts with serotonin. Residues 182-201 (DRYLGITRPLTYPVRQNGKC) are Cytoplasmic-facing. Residues 202 to 222 (MAKMILSVWLLSASITLPPLF) traverse the membrane as a helical segment. The Extracellular segment spans residues 223 to 240 (GWAQNVNDDKVCLISQDF). Residues 241 to 263 (GYTIYSTAVAFYIPMSVMLFMYY) traverse the membrane as a helical segment. At 264–329 (QIYKAARKSA…SIFKREQKAA (66 aa)) the chain is on the cytoplasmic side. Residues 330–355 (TTLGIIVGAFTVCWLPFFLLSTARPF) traverse the membrane as a helical segment. At 356–366 (ICGTSCSCIPL) the chain is on the extracellular side. The helical transmembrane segment at 367–390 (WVERTCLWLGYANSLINPFIYAFF) threads the bilayer. Over 391-448 (NRDLRTTYRSLLQCQYRNINRKLSAAGMHEALKLAERPERSEFVLQNCDHCGKKGHDT) the chain is Cytoplasmic. A lipid anchor (S-palmitoyl cysteine) is attached at Cys404.

It belongs to the G-protein coupled receptor 1 family.

It is found in the cell membrane. G-protein coupled receptor for 5-hydroxytryptamine (serotonin), a biogenic hormone that functions as a neurotransmitter, a hormone and a mitogen. Ligand binding causes a conformation change that triggers signaling via guanine nucleotide-binding proteins (G proteins) and modulates the activity of downstream effectors. HTR7 is coupled to G(s) G alpha proteins and mediates activation of adenylate cyclase activity. This is 5-hydroxytryptamine receptor 7 (Htr7) from Mus musculus (Mouse).